A 122-amino-acid polypeptide reads, in one-letter code: Large ribosomal subunit protein uL14 (122 aa).

The protein belongs to the universal ribosomal protein uL14 family. In terms of assembly, part of the 50S ribosomal subunit. Forms a cluster with proteins L3 and L19. In the 70S ribosome, L14 and L19 interact and together make contacts with the 16S rRNA in bridges B5 and B8.

Binds to 23S rRNA. Forms part of two intersubunit bridges in the 70S ribosome. This chain is Large ribosomal subunit protein uL14, found in Rickettsia typhi (strain ATCC VR-144 / Wilmington).